A 104-amino-acid chain; its full sequence is Small ribosomal subunit protein uS10 (104 aa).

It belongs to the universal ribosomal protein uS10 family. As to quaternary structure, part of the 30S ribosomal subunit.

Functionally, involved in the binding of tRNA to the ribosomes. The chain is Small ribosomal subunit protein uS10 from Xanthomonas oryzae pv. oryzae (strain MAFF 311018).